Consider the following 933-residue polypeptide: Protein inturned (933 aa).

The tract at residues Met1–Glu54 is disordered. Residues Gly37–Ser48 show a composition bias toward polar residues. In terms of domain architecture, PDZ spans Leu186–Asn264. A Phosphoserine modification is found at Ser675. The tract at residues Leu703–Glu742 is disordered. Residues Pro710–Gly719 show a composition bias toward low complexity. Residues Pro729–His738 are compositionally biased toward polar residues.

It belongs to the inturned family. Component of the CPLANE (ciliogenesis and planar polarity effectors) complex, composed of INTU, FUZ and WDPCP. Interacts with CPLANE1. Interacts with NPHP4 and DAAM1; INTU is mediating the interaction between NPHP4 and DAAM1.

It localises to the cytoplasm. The protein resides in the cell surface. Its subcellular location is the cytoskeleton. The protein localises to the cilium basal body. It is found in the microtubule organizing center. It localises to the centrosome. The protein resides in the centriole. In terms of biological role, plays a key role in ciliogenesis and embryonic development. Regulator of cilia formation by controlling the organization of the apical actin cytoskeleton and the positioning of the basal bodies at the apical cell surface, which in turn is essential for the normal orientation of elongating ciliary microtubules. Plays a key role in definition of cell polarity via its role in ciliogenesis but not via conversion extension. Has an indirect effect on hedgehog signaling. Proposed to function as core component of the CPLANE (ciliogenesis and planar polarity effectors) complex involved in the recruitment of peripheral IFT-A proteins to basal bodies. Required for recruitment of CPLANE2 to the mother centriole. Binds phosphatidylinositol 3-phosphate with highest affinity, followed by phosphatidylinositol 4-phosphate and phosphatidylinositol 5-phosphate. The sequence is that of Protein inturned (INTU) from Bos taurus (Bovine).